The primary structure comprises 225 residues: Orotate phosphoribosyltransferase (225 aa).

Lys-29 contributes to the 5-phospho-alpha-D-ribose 1-diphosphate binding site. Residue 37 to 38 participates in orotate binding; it reads FF. Residues 75-76, Arg-105, Lys-106, Lys-109, His-111, and 130-138 each bind 5-phospho-alpha-D-ribose 1-diphosphate; these read YK and DDVITAGTS. Orotate-binding residues include Thr-134 and Arg-162.

Belongs to the purine/pyrimidine phosphoribosyltransferase family. PyrE subfamily. Homodimer. Requires Mg(2+) as cofactor.

It catalyses the reaction orotidine 5'-phosphate + diphosphate = orotate + 5-phospho-alpha-D-ribose 1-diphosphate. The protein operates within pyrimidine metabolism; UMP biosynthesis via de novo pathway; UMP from orotate: step 1/2. Functionally, catalyzes the transfer of a ribosyl phosphate group from 5-phosphoribose 1-diphosphate to orotate, leading to the formation of orotidine monophosphate (OMP). The polypeptide is Orotate phosphoribosyltransferase (Bordetella petrii (strain ATCC BAA-461 / DSM 12804 / CCUG 43448)).